We begin with the raw amino-acid sequence, 316 residues long: Olfactory receptor 56B2 (316 aa).

Over 1–32 (MVLQELRDSNSSKFQVSEFILMGFPGIHSWQH) the chain is Extracellular. A glycan (N-linked (GlcNAc...) asparagine) is linked at asparagine 10. Residues 33–53 (WLSLPLALLYLLALSANILIL) form a helical membrane-spanning segment. Residues 54–61 (IIINKEAA) lie on the Cytoplasmic side of the membrane. The helical transmembrane segment at 62–82 (LHQPMYYFLGILAMADIGLAT) threads the bilayer. Residues 83–106 (TIMPKILAILWFNAKTISLLECFA) lie on the Extracellular side of the membrane. Cysteine 104 and cysteine 196 are oxidised to a cystine. A helical transmembrane segment spans residues 107-127 (QMYAIHCFVAMESSTFVCMAI). Residues 128–146 (DRYVAICRPLRYPSIITES) lie on the Cytoplasmic side of the membrane. The chain crosses the membrane as a helical span at residues 147–167 (FVFKANGFMALRNSLCLISVP). The Extracellular segment spans residues 168-203 (LLAAQRHYCSQNQIEHCLCSNLGVTSLSCDDRRINS). A helical membrane pass occupies residues 204-224 (INQVLLAWTLMGSDLGLIILS). Over 225–244 (YALILYSVLKLNSPEAASKA) the chain is Cytoplasmic. The helical transmembrane segment at 245–265 (LSTCTSHLILILFFYTVIIVI) threads the bilayer. Residues 266 to 279 (SITRSTGMRVPLIP) are Extracellular-facing. The helical transmembrane segment at 280-300 (VLLNVLHNVIPPALNPMVYAL) threads the bilayer. Topologically, residues 301–316 (KNKELRQGLYKVLRLE) are cytoplasmic.

Belongs to the G-protein coupled receptor 1 family.

The protein localises to the cell membrane. Functionally, odorant receptor. This Homo sapiens (Human) protein is Olfactory receptor 56B2.